We begin with the raw amino-acid sequence, 546 residues long: MPIANGDSLGCAMKADIQDYTKALEILEKEYTTRDGLDVDTLLDSDKHGALTYNDFLILPGYIGFPASDVTLDTPVTKRVSLKVPLLSSPMDTVTEHNMAIHMALLGGLGVIHHNCSPEDQAEMVRKVKRYENGFILDPVVLSPKATVGEAKALKAKWGFGGFPVTENGTLRSKLVGMVTSRDIQFHTNLDDPVTAIMSTDLVTAPAGTTLAEANDVLRSSKKGKLPIVDADGNLVSLLSRSDLMKNLHYPLASKLPDSKQLICAAAIGTREEDKHRLKLLVEAGLDIVVLDSSQGNSIYQIEMIKWVKKTFPEIDVIAGNVVTREQAAALIAAGADGLRIGMGSGSACITQEVMAVGRPQAVAVRSVASFAARFGVPCIADGGIQNVGHIVKGLAMGASTVMMGGLLAGTTESPGEYFVSNEGQLVKAYRGMGSIAAMEDKKAGAGSKDSKASNAGTARYFSEKDRVLVAQGVAGSVLDRGSVTKFVPYLVAGVQHSLQDIGVKSLDELHDGVNKGIVRFEMRSASAMAEGNVHGLHSYDKKLYS.

2 CBS domains span residues 135–197 (FILD…VTAI) and 198–254 (MSTD…PLAS). Residues 292–294 (DSS) and 342–344 (GMG) contribute to the NAD(+) site. K(+)-binding residues include G344 and G346. Residue S347 participates in IMP binding. C349 provides a ligand contact to K(+). Catalysis depends on C349, which acts as the Thioimidate intermediate. IMP contacts are provided by residues 382–384 (DGG), 405–406 (GG), and 430–434 (YRGMG). The Proton acceptor role is filled by R460. Residue Q472 participates in IMP binding. Positions 531 and 532 each coordinate K(+).

It belongs to the IMPDH/GMPR family. Homotetramer. K(+) serves as cofactor.

It is found in the cytoplasm. It catalyses the reaction IMP + NAD(+) + H2O = XMP + NADH + H(+). It participates in purine metabolism; XMP biosynthesis via de novo pathway; XMP from IMP: step 1/1. Its activity is regulated as follows. Mycophenolic acid (MPA) is a non-competitive inhibitor that prevents formation of the closed enzyme conformation by binding to the same site as the amobile flap. In contrast, mizoribine monophosphate (MZP) is a competitive inhibitor that induces the closed conformation. MPA is a potent inhibitor of mammalian IMPDHs but a poor inhibitor of the bacterial enzymes. MZP is a more potent inhibitor of bacterial IMPDH. In terms of biological role, catalyzes the conversion of inosine 5'-phosphate (IMP) to xanthosine 5'-phosphate (XMP), the first committed and rate-limiting step in the de novo synthesis of guanine nucleotides, and therefore plays an important role in the regulation of cell growth. The chain is Inosine-5'-monophosphate dehydrogenase from Aspergillus fumigatus (strain ATCC MYA-4609 / CBS 101355 / FGSC A1100 / Af293) (Neosartorya fumigata).